We begin with the raw amino-acid sequence, 637 residues long: 3D-(3,5/4)-trihydroxycyclohexane-1,2-dione hydrolase (637 aa).

A thiamine diphosphate-binding site is contributed by glutamate 65. Positions 441–521 (SLPGDLQRLW…INVLLFDNSG (81 aa)) are thiamine pyrophosphate binding. Mg(2+)-binding residues include aspartate 492 and asparagine 519.

Belongs to the TPP enzyme family. The cofactor is Mg(2+). Thiamine diphosphate serves as cofactor.

The catalysed reaction is 3D-3,5/4-trihydroxycyclohexane-1,2-dione + H2O = 5-deoxy-D-glucuronate + H(+). The protein operates within polyol metabolism; myo-inositol degradation into acetyl-CoA; acetyl-CoA from myo-inositol: step 3/7. In terms of biological role, involved in the cleavage of the C1-C2 bond of 3D-(3,5/4)-trihydroxycyclohexane-1,2-dione (THcHDO) to yield 5-deoxy-glucuronate (5DG). This Halalkalibacterium halodurans (strain ATCC BAA-125 / DSM 18197 / FERM 7344 / JCM 9153 / C-125) (Bacillus halodurans) protein is 3D-(3,5/4)-trihydroxycyclohexane-1,2-dione hydrolase.